An 888-amino-acid polypeptide reads, in one-letter code: 3-hydroxy-3-methylglutaryl-coenzyme A reductase (888 aa).

The Cytoplasmic portion of the chain corresponds to 1–9 (MLSRLFRMH). The helical transmembrane segment at 10-39 (GLFVASHPWEVIVGTVTLTICMMSMNMFTG) threads the bilayer. Topologically, residues 40-56 (NNKICGWNYECPKFEED) are lumenal. The chain crosses the membrane as a helical span at residues 57–78 (VLSSDIIILTITRCIAILYIYF). The SSD domain occupies 61-218 (DIIILTITRC…MTFFPACVSL (158 aa)). The INSIG-binding motif signature appears at 75–78 (YIYF). The Cytoplasmic segment spans residues 79–89 (QFQNLRQLGSK). Lysine 89 participates in a covalent cross-link: Glycyl lysine isopeptide (Lys-Gly) (interchain with G-Cter in ubiquitin). A helical transmembrane segment spans residues 90 to 114 (YILGIAGLFTIFSSFVFSTVVIHFL). Topologically, residues 115 to 123 (DKELTGLNE) are lumenal. The chain crosses the membrane as a helical span at residues 124 to 149 (ALPFFLLLIDLSRASTLAKFALSSNS). At 150–159 (QDEVRENIAR) the chain is on the cytoplasmic side. A helical transmembrane segment spans residues 160–187 (GMAILGPTFTLDALVECLVIGVGTMSGV). Over 188–191 (RQLE) the chain is Lumenal. Residues 192–220 (IMCCFGCMSVLANYFVFMTFFPACVSLVL) form a helical membrane-spanning segment. Over 221–248 (ELSRESREGRPIWLLSHFARVLEEEENK) the chain is Cytoplasmic. A Glycyl lysine isopeptide (Lys-Gly) (interchain with G-Cter in ubiquitin) cross-link involves residue lysine 248. The chain crosses the membrane as a helical span at residues 249–275 (PNPVTQRVKMIMSLGLVLVHAHSRWIA). At 276 to 314 (DPSPQNSTADTSKVSLGLDENVSKRIEPSVSLWQFYLSK) the chain is on the lumenal side. 2 N-linked (GlcNAc...) asparagine glycosylation sites follow: asparagine 281 and asparagine 296. A helical transmembrane segment spans residues 315–339 (MISMDIEQVITLSLALLLAVKYIFF). Residues 340–888 (EQTETESTLS…LQGACTKKTA (549 aa)) are Cytoplasmic-facing. Catalysis depends on charge relay system residues glutamate 559, lysine 691, and aspartate 767. The active-site Proton donor is the histidine 866. Residue serine 872 is modified to Phosphoserine; by AMPK.

Belongs to the HMG-CoA reductase family. In terms of assembly, homotetramer. Homodimer. Interacts (via its SSD) with INSIG1; the interaction, accelerated by sterols, leads to the recruitment of HMGCR to AMFR/gp78 for its ubiquitination by the sterol-mediated ERAD pathway. Interacts with UBIAD1. Undergoes sterol-mediated ubiquitination and ER-associated degradation (ERAD). Accumulation of sterols in the endoplasmic reticulum (ER) membrane, triggers binding of the reductase to the ER membrane protein INSIG1 or INSIG2. The INSIG1 binding leads to the recruitment of the ubiquitin ligase, AMFR/gp78, RNF139 or RNF145, initiating ubiquitination of the reductase. The ubiquitinated reductase is then extracted from the ER membrane and delivered to cytosolic 26S proteosomes by a mechanism probably mediated by the ATPase Valosin-containing protein VCP/p97. The INSIG2-binding leads to the recruitment of the ubiquitin ligase RNF139, initiating ubiquitination of the reductase. Lys-248 is the main site of ubiquitination. Ubiquitination is enhanced by the presence of a geranylgeranylated protein. In terms of processing, N-glycosylated. Deglycosylated by NGLY1 on release from the endoplasmic reticulum (ER) in a sterol-mediated manner. Post-translationally, phosphorylated. Phosphorylation at Ser-872 reduces the catalytic activity.

The protein localises to the endoplasmic reticulum membrane. Its subcellular location is the peroxisome membrane. It catalyses the reaction (R)-mevalonate + 2 NADP(+) + CoA = (3S)-3-hydroxy-3-methylglutaryl-CoA + 2 NADPH + 2 H(+). It functions in the pathway metabolic intermediate biosynthesis; (R)-mevalonate biosynthesis; (R)-mevalonate from acetyl-CoA: step 3/3. Regulated by a negative feedback mechanism through sterols and non-sterol metabolites derived from mevalonate. Phosphorylation at Ser-872 down-regulates the catalytic activity. In terms of biological role, catalyzes the conversion of (3S)-hydroxy-3-methylglutaryl-CoA (HMG-CoA) to mevalonic acid, the rate-limiting step in the synthesis of cholesterol and other isoprenoids, thus plays a critical role in cellular cholesterol homeostasis. The polypeptide is 3-hydroxy-3-methylglutaryl-coenzyme A reductase (HMGCR) (Pongo abelii (Sumatran orangutan)).